Consider the following 805-residue polypeptide: Sucrose synthase (805 aa).

Positions 275-752 (MVFNVVILSP…GLQRIEEKYT (478 aa)) are GT-B glycosyltransferase.

The protein belongs to the glycosyltransferase 1 family. Plant sucrose synthase subfamily.

It catalyses the reaction an NDP-alpha-D-glucose + D-fructose = a ribonucleoside 5'-diphosphate + sucrose + H(+). In terms of biological role, sucrose-cleaving enzyme that provides UDP-glucose and fructose for various metabolic pathways. This is Sucrose synthase from Medicago sativa (Alfalfa).